Reading from the N-terminus, the 557-residue chain is MAAQGFLLIATFLLVLMVLARPLGSGLARLINDIPLPGTTGVERVLFSALGVSDREMNWKQYLSAILGLNILGLAVLFFMLLGQHYLPLNPQQLPGLSWDLALNTAVSFVTNTNWQSYSGETTLSYFSQMAGLTVQNFLSAASGIAVIFALIRAFTRQSMSTLGNAWVDLLRITLWVLAPVALLIALFFIQQGALQNFLPYQAVTTIEGSQQLLPMGPVASQEAIKMLGTNGGGFFNANSSHPFENPTALTNFVQMLAIFLIPTALCFAFGEVAGDRRQGRMLLWAMSVIFVICTGVVMWAEVQGNPHLLALGADSSINMEGKESRFGVLVSSLFAVVTTAASCGAVIAMHDSFTALGGMVPMWLMQIGEVVFGGVGSGLYGMMLFVLLAVFIAGLMIGRTPEYLGKKIDVREMKLTALAILVTPTLVLMGAALAMMTDAGRSAMLNPGPHGFSEVLYAVSSAANNNGSAFAGLSANSPFWNCLLALCMFVGRFGVIIPVMAIAGSLVSKKSQPASSGTLPTHGPLFVGLLIGTVLLVGALTFIPALALGPVAEYLS.

A run of 12 helical transmembrane segments spans residues 5-25 (GFLL…PLGS), 63-83 (LSAI…MLLG), 132-152 (GLTV…FALI), 170-190 (LLRI…LFFI), 253-273 (FVQM…FGEV), 283-303 (LLWA…WAEV), 329-349 (VLVS…AVIA), 356-376 (ALGG…FGGV), 379-399 (GLYG…LMIG), 416-436 (LTAL…ALAM), 484-504 (LLAL…MAIA), and 526-546 (LFVG…FIPA).

This sequence belongs to the KdpA family. The system is composed of three essential subunits: KdpA, KdpB and KdpC.

It is found in the cell inner membrane. Functionally, part of the high-affinity ATP-driven potassium transport (or Kdp) system, which catalyzes the hydrolysis of ATP coupled with the electrogenic transport of potassium into the cytoplasm. This subunit binds the periplasmic potassium ions and delivers the ions to the membrane domain of KdpB through an intramembrane tunnel. In Escherichia coli O6:H1 (strain CFT073 / ATCC 700928 / UPEC), this protein is Potassium-transporting ATPase potassium-binding subunit.